The sequence spans 147 residues: Small ribosomal subunit protein uS5 (147 aa).

The S5 DRBM domain occupies 9–72 (FEEVVVNISR…DNAFKNITTV (64 aa)).

It belongs to the universal ribosomal protein uS5 family. As to quaternary structure, part of the 30S ribosomal subunit. Contacts proteins S4 and S8.

Functionally, with S4 and S12 plays an important role in translational accuracy. Its function is as follows. Located at the back of the 30S subunit body where it stabilizes the conformation of the head with respect to the body. This is Small ribosomal subunit protein uS5 from Nitratiruptor sp. (strain SB155-2).